We begin with the raw amino-acid sequence, 287 residues long: HTH-type transcriptional regulator MurR (287 aa).

One can recognise an HTH rpiR-type domain in the interval 1-77 (MLYLAKMRNA…MALIEEHSVS (77 aa)). The segment at residues 37–56 (SRNMAKQLEISQSSIVKFAQ) is a DNA-binding region (H-T-H motif). The SIS domain maps to 128–268 (VINLISKAPL…FVGMVQLNDV (141 aa)).

In terms of assembly, homotetramer.

It participates in amino-sugar metabolism; N-acetylmuramate degradation [regulation]. Represses the expression of the murPQ operon involved in the uptake and degradation of N-acetylmuramic acid (MurNAc). Binds to two adjacent inverted repeats within the operator region. MurNAc 6-phosphate, the substrate of MurQ, is the specific inducer that weakens binding of MurR to the operator. This is HTH-type transcriptional regulator MurR from Salmonella arizonae (strain ATCC BAA-731 / CDC346-86 / RSK2980).